A 369-amino-acid chain; its full sequence is Endophilin-A (369 aa).

Residues 18-248 (TEKMGGAEGT…LQEKRSEAES (231 aa)) enclose the BAR domain. The stretch at 227–247 (QCADVLRGLQETLQEKRSEAE) forms a coiled coil. The tract at residues 266–295 (GGGGGLNEDGTPSHISSSASPLPSPMRSPA) is disordered. Residues 277–294 (PSHISSSASPLPSPMRSP) are compositionally biased toward low complexity. The SH3 domain maps to 305-364 (QQQPCCQALYDFEPENPGELAFKENDIITLLNRVDDNWFEGAVNGRTGYFPQSYVQVQVP).

Belongs to the endophilin family.

It localises to the cytoplasm. The protein localises to the membrane. In terms of biological role, required presynaptically at the neuromuscular junction. Implicated in synaptic vesicle endocytosis. This chain is Endophilin-A, found in Drosophila erecta (Fruit fly).